The chain runs to 555 residues: GPI-anchor transamidase component PIGS (555 aa).

At 2 to 18 (ATAGAAATDLEVVRGKR) the chain is on the cytoplasmic side. R15 and R18 together coordinate a cardiolipin. Residues 19 to 39 (AALFFAAVAILLGLPLWWKTT) form a helical membrane-spanning segment. At 40–517 (ETYRAPLPYS…LHLLYFPDDQ (478 aa)) the chain is on the lumenal side. 2 N-linked (GlcNAc...) asparagine glycosylation sites follow: N267 and N370. Residues 518–532 (KFAIYIPLFLPMAVP) traverse the membrane as a helical segment. Residues 533–555 (ILLSLVKIFLETHKSWKKPEKID) are Cytoplasmic-facing.

Belongs to the PIGS family. As to quaternary structure, heteropentamer. Part of the GPI-anchor transamidase complex, consisting of PIGK, PIGT, PIGS, PIGU and GAA1.

The protein resides in the endoplasmic reticulum membrane. The protein operates within glycolipid biosynthesis; glycosylphosphatidylinositol-anchor biosynthesis. Functionally, component of the glycosylphosphatidylinositol-anchor (GPI-anchor) transamidase (GPI-T) complex that catalyzes the formation of the linkage between a proprotein and a GPI-anchor and participates in GPI anchored protein biosynthesis. The sequence is that of GPI-anchor transamidase component PIGS from Rattus norvegicus (Rat).